A 754-amino-acid chain; its full sequence is Condensin complex subunit 2 (754 aa).

Residues 104 to 149 (LAQRKTNGASNGDDSNGGNGEGLGGDSDEANIEIDPLTGMPISNDP) form a disordered region. Residues 118–128 (SNGGNGEGLGG) show a composition bias toward gly residues. At Ser245 the chain carries Phosphoserine. The tract at residues 359 to 379 (CYPDENHDNTSHDEQDDDNVN) is disordered. Residues 362–371 (DENHDNTSHD) show a composition bias toward basic and acidic residues. Ser548 bears the Phosphoserine mark. The segment at 665–688 (HDSRKNREQSSNDSETHTEDESTK) is disordered.

It belongs to the CND2 (condensin subunit 2) family. Component of the condensin complex, which contains the SMC2 and SMC4 heterodimer, and three non SMC subunits that probably regulate the complex: BRN1, YCS4 and YCG1/YCS5.

The protein localises to the nucleus. It is found in the cytoplasm. The protein resides in the chromosome. Its function is as follows. Regulatory subunit of the condensin complex, a complex required for conversion of interphase chromatin into mitotic-like condense chromosomes. The condensin complex probably introduces positive supercoils into relaxed DNA in the presence of type I topoisomerases and converts nicked DNA into positive knotted forms in the presence of type II topoisomerases. The condensin complex probably also plays a role during interphase. The polypeptide is Condensin complex subunit 2 (BRN1) (Saccharomyces cerevisiae (strain ATCC 204508 / S288c) (Baker's yeast)).